A 389-amino-acid polypeptide reads, in one-letter code: Transcription factor MYB97 (389 aa).

HTH myb-type domains follow at residues 16 to 68 and 69 to 123; these read GVVL…ANHL and RPNL…KRFQ. DNA-binding regions (H-T-H motif) lie at residues 44–68 and 96–119; these read WNSV…ANHL and WARM…NTRL. The disordered stretch occupies residues 131-159; sequence PPEYSQNNHQQQMYPQQPSSPLPSQTPAS. Positions 140 to 159 are enriched in low complexity; sequence QQQMYPQQPSSPLPSQTPAS.

In terms of tissue distribution, accumulates in pollen grains and pollen tube. Mostly expressed in mature pollen grains, and, to a lower extent, in inflorescences and siliques.

The protein localises to the nucleus. Transcription activator. Binds to 5'-CAACTGTC-3' and/or 5'-TAACAAA-3' motif in target gene promoter to promote their expression. Together with MYB101 and MYB120, functions as a male factor that controls pollen tube-synergid interaction in fertilization. Required for pollen tube growth arrest and sperm cell release in the female gametophyte, probably via the regulation of pollen tube-specific gene expression. The chain is Transcription factor MYB97 from Arabidopsis thaliana (Mouse-ear cress).